Reading from the N-terminus, the 945-residue chain is Isoleucine--tRNA ligase (945 aa).

Positions 66-76 (PYANGDIHLGH) match the 'HIGH' region motif. Glu-581 provides a ligand contact to L-isoleucyl-5'-AMP. The 'KMSKS' region motif lies at 622–626 (KMSKS). Position 625 (Lys-625) interacts with ATP. Residues Cys-908, Cys-911, Cys-928, and Cys-931 each coordinate Zn(2+).

Belongs to the class-I aminoacyl-tRNA synthetase family. IleS type 1 subfamily. Monomer. Zn(2+) serves as cofactor.

It localises to the cytoplasm. The enzyme catalyses tRNA(Ile) + L-isoleucine + ATP = L-isoleucyl-tRNA(Ile) + AMP + diphosphate. Functionally, catalyzes the attachment of isoleucine to tRNA(Ile). As IleRS can inadvertently accommodate and process structurally similar amino acids such as valine, to avoid such errors it has two additional distinct tRNA(Ile)-dependent editing activities. One activity is designated as 'pretransfer' editing and involves the hydrolysis of activated Val-AMP. The other activity is designated 'posttransfer' editing and involves deacylation of mischarged Val-tRNA(Ile). The protein is Isoleucine--tRNA ligase of Burkholderia cenocepacia (strain HI2424).